The sequence spans 176 residues: ATP-dependent protease subunit HslV (176 aa).

Thr-2 is an active-site residue. The Na(+) site is built by Gly-157, Cys-160, and Thr-163.

It belongs to the peptidase T1B family. HslV subfamily. As to quaternary structure, a double ring-shaped homohexamer of HslV is capped on each side by a ring-shaped HslU homohexamer. The assembly of the HslU/HslV complex is dependent on binding of ATP.

Its subcellular location is the cytoplasm. It catalyses the reaction ATP-dependent cleavage of peptide bonds with broad specificity.. Its activity is regulated as follows. Allosterically activated by HslU binding. In terms of biological role, protease subunit of a proteasome-like degradation complex believed to be a general protein degrading machinery. In Escherichia coli O139:H28 (strain E24377A / ETEC), this protein is ATP-dependent protease subunit HslV.